The following is a 453-amino-acid chain: Chromosomal replication initiator protein DnaA (453 aa).

The tract at residues 1–73 is domain I, interacts with DnaA modulators; that stretch reads MNISPQYLWN…AQEVASVVGY (73 aa). The interval 73–112 is domain II; it reads YPVDIQLTTAEGETMAMTGEAQSYQEKSLTQIAPESPKLN. The interval 113-329 is domain III, AAA+ region; the sequence is QLNPRYTFSR…GALIRAIAYT (217 aa). ATP-binding residues include Gly157, Gly159, Lys160, and Thr161. Residues 330–453 are domain IV, binds dsDNA; that stretch reads SISGLSMTVQ…RINMASRTQS (124 aa).

This sequence belongs to the DnaA family. Oligomerizes as a right-handed, spiral filament on DNA at oriC.

Its subcellular location is the cytoplasm. In terms of biological role, plays an essential role in the initiation and regulation of chromosomal replication. ATP-DnaA binds to the origin of replication (oriC) to initiate formation of the DNA replication initiation complex once per cell cycle. Binds the DnaA box (a 9 base pair repeat at the origin) and separates the double-stranded (ds)DNA. Forms a right-handed helical filament on oriC DNA; dsDNA binds to the exterior of the filament while single-stranded (ss)DNA is stabiized in the filament's interior. The ATP-DnaA-oriC complex binds and stabilizes one strand of the AT-rich DNA unwinding element (DUE), permitting loading of DNA polymerase. After initiation quickly degrades to an ADP-DnaA complex that is not apt for DNA replication. Binds acidic phospholipids. The protein is Chromosomal replication initiator protein DnaA of Rippkaea orientalis (strain PCC 8801 / RF-1) (Cyanothece sp. (strain PCC 8801)).